The chain runs to 451 residues: Signal transduction histidine-protein kinase ArlS (451 aa).

2 helical membrane-spanning segments follow: residues 11 to 31 (IIVT…IIIF) and 156 to 176 (IIAL…SYVF). Residues 178-231 (TQITKPLVSLSNKMIEIRRDGFQNKLQLNTNYEEIDNLANTFNEMMSQIEESFN) enclose the HAMP domain. One can recognise a Histidine kinase domain in the interval 239–451 (DASHELRTPL…NKGTTFKIIF (213 aa)). His-242 carries the post-translational modification Phosphohistidine; by autocatalysis.

In terms of processing, autophosphorylated.

The protein localises to the cell membrane. The enzyme catalyses ATP + protein L-histidine = ADP + protein N-phospho-L-histidine.. Functionally, member of the two-component regulatory system ArlS/ArlR involved in the regulation of adhesion, autolysis, multidrug resistance and virulence. ArlS probably functions as a sensor protein kinase which is autophosphorylated at a histidine residue and transfers its phosphate group to ArlR. This Staphylococcus aureus (strain USA300) protein is Signal transduction histidine-protein kinase ArlS (arlS).